Here is a 166-residue protein sequence, read N- to C-terminus: Short form salivary protein D7R5 (166 aa).

An N-terminal signal peptide occupies residues 1 to 22; that stretch reads MEWRYFVVIALICPLIIVETLA. 3 disulfides stabilise this stretch: Cys26–Cys58, Cys39–Cys166, and Cys98–Cys117.

Belongs to the PBP/GOBP family.

It is found in the secreted. In contrast to the related D7 salivary proteins, does not bind biogenic amines such as serotonin, noradrenaline, histamine and adrenaline. It is hypothesized that either D7r5 evolved an as yet unknown function or is becoming a pseudogene. The sequence is that of Short form salivary protein D7R5 from Anopheles gambiae (African malaria mosquito).